The primary structure comprises 232 residues: 5'-methylthioadenosine/S-adenosylhomocysteine nucleosidase (232 aa).

Glu12 acts as the Proton acceptor in catalysis. Residues Gly78, Val153, and Met174–Glu175 each bind substrate. Catalysis depends on Asp198, which acts as the Proton donor.

Belongs to the PNP/UDP phosphorylase family. MtnN subfamily.

It carries out the reaction S-adenosyl-L-homocysteine + H2O = S-(5-deoxy-D-ribos-5-yl)-L-homocysteine + adenine. The enzyme catalyses S-methyl-5'-thioadenosine + H2O = 5-(methylsulfanyl)-D-ribose + adenine. It catalyses the reaction 5'-deoxyadenosine + H2O = 5-deoxy-D-ribose + adenine. It functions in the pathway amino-acid biosynthesis; L-methionine biosynthesis via salvage pathway; S-methyl-5-thio-alpha-D-ribose 1-phosphate from S-methyl-5'-thioadenosine (hydrolase route): step 1/2. Catalyzes the irreversible cleavage of the glycosidic bond in both 5'-methylthioadenosine (MTA) and S-adenosylhomocysteine (SAH/AdoHcy) to adenine and the corresponding thioribose, 5'-methylthioribose and S-ribosylhomocysteine, respectively. Also cleaves 5'-deoxyadenosine, a toxic by-product of radical S-adenosylmethionine (SAM) enzymes, into 5-deoxyribose and adenine. The sequence is that of 5'-methylthioadenosine/S-adenosylhomocysteine nucleosidase from Photobacterium profundum (strain SS9).